The primary structure comprises 83 residues: Large ribosomal subunit protein bL27 (83 aa).

Residues 1 to 21 (MAHKRSSGAGRNGRDSNPKYL) are disordered.

This sequence belongs to the bacterial ribosomal protein bL27 family.

This chain is Large ribosomal subunit protein bL27, found in Kosmotoga olearia (strain ATCC BAA-1733 / DSM 21960 / TBF 19.5.1).